Reading from the N-terminus, the 98-residue chain is Sm-like protein LSM3B (98 aa).

Ser-2 carries the post-translational modification N-acetylserine. The Sm domain maps to 11–96; it reads EPLDLIRLSL…VILVSPPLRT (86 aa).

The protein belongs to the snRNP Sm proteins family. Component of the heptameric LSM1-LSM7 complex that forms a seven-membered ring structure with a donut shape. The LSM subunits are arranged in the order LSM1, LSM2, LSM3, LSM6, LSM5, LSM7 and LSM4. Component of the heptameric LSM2-LSM8 complex that forms a seven-membered ring structure with a donut shape. The LSM subunits are arranged in the order LSM8, LSM2, LSM3, LSM6, LSM5, LSM7 and LSM4. LSM3B subunit interacts only with its two neighboring subunits, LSM2 and LSM6A or LSM6B. Expressed in roots, leaves, stems, flowers and siliques.

It localises to the cytoplasm. The protein resides in the nucleus. In terms of biological role, component of LSM protein complexes, which are involved in RNA processing. Component of the cytoplasmic LSM1-LSM7 complex which is involved in mRNA degradation by promoting decapping and leading to accurate 5'-3' mRNA decay. The cytoplasmic LSM1-LSM7 complex regulates developmental gene expression by the decapping of specific development-related transcripts. Component of the nuclear LSM2-LSM8 complex which is involved splicing nuclear mRNAs. LSM2-LSM8 binds directly to the U6 small nuclear RNAs (snRNAs) and is essential for accurate splicing of selected development-related mRNAs through the stabilization of the spliceosomal U6 snRNA. Plays a critical role in the regulation of development-related gene expression. The chain is Sm-like protein LSM3B from Arabidopsis thaliana (Mouse-ear cress).